A 173-amino-acid chain; its full sequence is Crossover junction endodeoxyribonuclease RuvC (173 aa).

Residues aspartate 8, glutamate 67, and aspartate 139 contribute to the active site. Positions 8, 67, and 139 each coordinate Mg(2+).

It belongs to the RuvC family. Homodimer which binds Holliday junction (HJ) DNA. The HJ becomes 2-fold symmetrical on binding to RuvC with unstacked arms; it has a different conformation from HJ DNA in complex with RuvA. In the full resolvosome a probable DNA-RuvA(4)-RuvB(12)-RuvC(2) complex forms which resolves the HJ. The cofactor is Mg(2+).

It localises to the cytoplasm. It carries out the reaction Endonucleolytic cleavage at a junction such as a reciprocal single-stranded crossover between two homologous DNA duplexes (Holliday junction).. Its function is as follows. The RuvA-RuvB-RuvC complex processes Holliday junction (HJ) DNA during genetic recombination and DNA repair. Endonuclease that resolves HJ intermediates. Cleaves cruciform DNA by making single-stranded nicks across the HJ at symmetrical positions within the homologous arms, yielding a 5'-phosphate and a 3'-hydroxyl group; requires a central core of homology in the junction. The consensus cleavage sequence is 5'-(A/T)TT(C/G)-3'. Cleavage occurs on the 3'-side of the TT dinucleotide at the point of strand exchange. HJ branch migration catalyzed by RuvA-RuvB allows RuvC to scan DNA until it finds its consensus sequence, where it cleaves and resolves the cruciform DNA. In terms of biological role, plays a role in recovery after DNA ADP-ribosylation, probably via replication fork reversal. The polypeptide is Crossover junction endodeoxyribonuclease RuvC (Escherichia coli O127:H6 (strain E2348/69 / EPEC)).